A 233-amino-acid polypeptide reads, in one-letter code: Glucosamine-6-phosphate deaminase (233 aa).

The active-site Proton acceptor; for enolization step is the Asp62. Residue Asn128 is the For ring-opening step of the active site. His130 (proton acceptor; for ring-opening step) is an active-site residue. Catalysis depends on Glu135, which acts as the For ring-opening step.

This sequence belongs to the glucosamine/galactosamine-6-phosphate isomerase family. NagB subfamily.

It carries out the reaction alpha-D-glucosamine 6-phosphate + H2O = beta-D-fructose 6-phosphate + NH4(+). The protein operates within amino-sugar metabolism; N-acetylneuraminate degradation; D-fructose 6-phosphate from N-acetylneuraminate: step 5/5. In terms of biological role, catalyzes the reversible isomerization-deamination of glucosamine 6-phosphate (GlcN6P) to form fructose 6-phosphate (Fru6P) and ammonium ion. The polypeptide is Glucosamine-6-phosphate deaminase (Streptococcus agalactiae serotype Ia (strain ATCC 27591 / A909 / CDC SS700)).